Consider the following 642-residue polypeptide: Influenza virus NS1A-binding protein (642 aa).

The region spanning 1–131 (MIPNGYLMFE…GDYLLSRMDV (131 aa)) is the BTB domain. The BACK domain occupies 132-350 (TSCISYRNFA…MQQDELIEKP (219 aa)). The segment at 164–368 (ISEEEEFLKL…SGLGTAEMNG (205 aa)) is sufficient for AHR interaction and signaling. Ser246, Ser277, Ser322, Ser336, and Ser338 each carry phosphoserine. The disordered stretch occupies residues 257 to 281 (KPPRENGHKQISSSSTGCLSSPNAT). Residues 265-281 (KQISSSSTGCLSSPNAT) are compositionally biased toward polar residues. Kelch repeat units follow at residues 384–421 (TVECYNPHTDHWSFLAPMRTPRARFQMAVLMGQLYVVG), 432–469 (CGEMYDSNIDDWIPVPELRTNRCNAGVCALNGKLYIVG), 481–518 (NCDVFDPVTKLWTSCAPLNIRRHQSAVCELGGYLYIIG), 527–565 (NTVERYNPENNTWTLIAPMNVARRGAGVAVLNGKLFVCG), 575–612 (CVEMYDPTRNEWKMMGNMTSPRSNAGIATVGNTIYAVG), and 622–642 (TVEVYNLESNEWSPYTKIFQF).

This sequence belongs to the BTB-kelch protein family. In terms of assembly, homodimer; through the BTB domain. Interacts with AHR/Aryl hydrocarbon receptor. Interacts (via BACK domain) with pre-mRNA-binding protein HNRNPK; the interaction is direct. Interacts (via BACK domain) with splicing factor PTBP1; the interaction is direct. Interacts (via Kelch repeats) with RNA polymerase POLR2A (via C-terminal domain). Interacts (via BACK domain) with splicing factor SNRPA; the interaction is indirect. Interacts (via Kelch repeats) with splicing factor SART1. Interacts (via BACK domain) with ALYREF; the interaction is indirect and likely plays a role in mRNA nuclear export. Interacts (via Kelch repeats) with KLHL20 (via Kelch repeats); this interaction blocks the assembly of Cul3-KLHL20 complex. (Microbial infection) Interacts (via BACK domain) with influenza A virus non-structural protein 1 (NS1); the interaction is direct and bridges the interaction between NS1 and HNRNPK.

The protein localises to the cytoplasm. The protein resides in the cytoskeleton. It localises to the nucleus. Its subcellular location is the nucleoplasm. Involved in many cell functions, including pre-mRNA splicing, the aryl hydrocarbon receptor (AHR) pathway, F-actin organization and protein ubiquitination. Plays a role in the dynamic organization of the actin skeleton as a stabilizer of actin filaments by association with F-actin through Kelch repeats. Protects cells from cell death induced by actin destabilization. Functions as modifier of the AHR/Aryl hydrocarbon receptor pathway increasing the concentration of AHR available to activate transcription. In addition, functions as a negative regulator of BCR(KLHL20) E3 ubiquitin ligase complex to prevent ubiquitin-mediated proteolysis of PML and DAPK1, two tumor suppressors. Inhibits pre-mRNA splicing (in vitro). May play a role in mRNA nuclear export. In terms of biological role, (Microbial infection) Involved in the alternative splicing of influenza A virus M1 mRNA through interaction with HNRNPK, thereby facilitating the generation of viral M2 protein. The BTB and Kelch domains are required for splicing activity. Promotes export of viral M mRNA and RNP via its interaction with mRNA export factor ALYREF. The sequence is that of Influenza virus NS1A-binding protein from Homo sapiens (Human).